A 312-amino-acid chain; its full sequence is R2-like ligand binding oxidase (312 aa).

Mn(2+) contacts are provided by Glu-68, Glu-101, and His-104. The segment at residues 71–162 (VTQDIQPFMA…AAQVRASATY (92 aa)) is a cross-link (3-(O4'-tyrosyl)-valine (Val-Tyr)). Residue Glu-101 coordinates Fe cation. Residues Glu-167, Glu-202, and His-205 each contribute to the Fe cation site.

The protein belongs to the ribonucleoside diphosphate reductase small chain family. R2-like ligand binding oxidase subfamily. In terms of assembly, homodimer. Fe cation serves as cofactor. The cofactor is Mn(2+).

In terms of biological role, probable oxidase that might be involved in lipid metabolism. The chain is R2-like ligand binding oxidase from Mycobacterium sp. (strain KMS).